We begin with the raw amino-acid sequence, 226 residues long: MLLHIPGLFDADELARIREALERADWADGKVTAGYQSAKAKHNLQLPEGHALAKEIGTALIDRLWKTPRFMSAALPHKVFPPLINCYRDGGNFGFHIDNALRQPKGSPERVRTDLSSTLFLSDPESYDGGELVIQDTYGVQQIKLAAGDMVLYPGTSLHKVNPVTRGQRYAAFFWTQSLVRDDSQRALLFEMDNAIQQLTADVPDHPSLLQLTGTYHNLLRRWAEV.

A Fe2OG dioxygenase domain is found at 78–178 (KVFPPLINCY…RYAAFFWTQS (101 aa)). Positions 96, 98, and 159 each coordinate Fe cation. R169 serves as a coordination point for 2-oxoglutarate.

Requires Fe(2+) as cofactor. L-ascorbate is required as a cofactor.

This Pseudomonas putida (strain ATCC 47054 / DSM 6125 / CFBP 8728 / NCIMB 11950 / KT2440) protein is PKHD-type hydroxylase PP_0862.